Consider the following 445-residue polypeptide: Glycine--tRNA ligase (445 aa).

Positions 97 and 145 each coordinate substrate. ATP contacts are provided by residues 177–179 (RNE), 187–192 (FRTCEF), 262–263 (EV), and 308–311 (GLTR). A substrate-binding site is contributed by 192–196 (FEQME). 304 to 308 (ETSAG) is a substrate binding site.

Belongs to the class-II aminoacyl-tRNA synthetase family. In terms of assembly, homodimer.

Its subcellular location is the cytoplasm. It carries out the reaction tRNA(Gly) + glycine + ATP = glycyl-tRNA(Gly) + AMP + diphosphate. Its function is as follows. Catalyzes the attachment of glycine to tRNA(Gly). The chain is Glycine--tRNA ligase from Borreliella burgdorferi (strain ZS7) (Borrelia burgdorferi).